Consider the following 315-residue polypeptide: Diacylglycerol kinase (315 aa).

The region spanning 1 to 132 (MRKRARIIYN…VDIGKMNNRY (132 aa)) is the DAGKc domain. ATP contacts are provided by residues 10–14 (NPTSG), threonine 41, 67–73 (GDGTLNE), and threonine 94. The Mg(2+) site is built by lysine 213, aspartate 216, and tyrosine 218. The active-site Proton acceptor is the glutamate 273.

Belongs to the diacylglycerol/lipid kinase family. In terms of assembly, homodimer. Mg(2+) is required as a cofactor.

The enzyme catalyses a 1,2-diacyl-sn-glycerol + ATP = a 1,2-diacyl-sn-glycero-3-phosphate + ADP + H(+). Catalyzes the phosphorylation of diacylglycerol (DAG) into phosphatidic acid. Is a key enzyme involved in the production of lipoteichoic acid by reintroducing DAG formed from the breakdown of membrane phospholipids into the phosphatidylglycerol biosynthetic pathway. This is Diacylglycerol kinase (dagK) from Staphylococcus aureus (strain USA300 / TCH1516).